Reading from the N-terminus, the 100-residue chain is Small ribosomal subunit protein uS14c (100 aa).

Belongs to the universal ribosomal protein uS14 family. As to quaternary structure, part of the 30S ribosomal subunit.

Its subcellular location is the plastid. It localises to the chloroplast. In terms of biological role, binds 16S rRNA, required for the assembly of 30S particles. This Porphyra purpurea (Red seaweed) protein is Small ribosomal subunit protein uS14c.